A 336-amino-acid chain; its full sequence is Secreted effector protein SifA (336 aa).

The segment at 1-330 is interaction with host PLEKHM2; the sequence is MPITIGNGFL…LHVRSEQQSG (330 aa).

Belongs to the Sif family. In terms of assembly, interacts with host PLEKHM2. Interacts with SseJ; the interaction is indirect.

The protein resides in the secreted. It is found in the host cytoplasm. Its subcellular location is the host cell membrane. Functionally, effector proteins function to alter host cell physiology and promote bacterial survival in host tissues. This protein is required for endosomal tubulation and formation of Salmonella-induced filaments (Sifs), which are filamentous structures containing lysosomal membrane glycoproteins within epithelial cells. Sif formation is concomitant with intracellular bacterial replication. In Salmonella typhimurium (strain LT2 / SGSC1412 / ATCC 700720), this protein is Secreted effector protein SifA (sifA).